We begin with the raw amino-acid sequence, 157 residues long: Small ribosomal subunit protein uS7 (157 aa).

This sequence belongs to the universal ribosomal protein uS7 family. As to quaternary structure, part of the 30S ribosomal subunit. Contacts proteins S9 and S11.

Functionally, one of the primary rRNA binding proteins, it binds directly to 16S rRNA where it nucleates assembly of the head domain of the 30S subunit. Is located at the subunit interface close to the decoding center, probably blocks exit of the E-site tRNA. The chain is Small ribosomal subunit protein uS7 from Psychrobacter sp. (strain PRwf-1).